The sequence spans 542 residues: Apolipoprotein N-acyltransferase (542 aa).

6 consecutive transmembrane segments (helical) span residues 24–44, 54–74, 85–105, 116–136, 160–180, and 190–210; these read VVASVVSCICGYSLLWAGLFA, VWCIAFIWTWTVEGAHFSWML, FVWGILLSYLATLFASFSCLV, ALVWLPGVWVAIEAIRYYGLL, FFGWAGQSFLVIAANICCFAV, and GLWLTLCAFPYLLGGAHYEYL. Residues 220-499 form the CN hydrolase domain; it reads LRVAIVQPGY…TGVLQVSVPL (280 aa). The active-site Proton acceptor is the Glu-264. The active site involves Lys-349. Residue Cys-404 is the Nucleophile of the active site. The helical transmembrane segment at 509 to 529 threads the bilayer; the sequence is LGDAPLLLIAVCSVIGAIAYF.

The protein belongs to the CN hydrolase family. Apolipoprotein N-acyltransferase subfamily.

It is found in the cell inner membrane. It carries out the reaction N-terminal S-1,2-diacyl-sn-glyceryl-L-cysteinyl-[lipoprotein] + a glycerophospholipid = N-acyl-S-1,2-diacyl-sn-glyceryl-L-cysteinyl-[lipoprotein] + a 2-acyl-sn-glycero-3-phospholipid + H(+). The protein operates within protein modification; lipoprotein biosynthesis (N-acyl transfer). Its function is as follows. Catalyzes the phospholipid dependent N-acylation of the N-terminal cysteine of apolipoprotein, the last step in lipoprotein maturation. The chain is Apolipoprotein N-acyltransferase from Chlamydia trachomatis serovar D (strain ATCC VR-885 / DSM 19411 / UW-3/Cx).